A 325-amino-acid chain; its full sequence is Small ribosomal subunit protein uS3 (325 aa).

The 69-residue stretch at 38–106 (IRKMMSKGME…QVQLNILEVK (69 aa)) folds into the KH type-2 domain. The segment at 217–325 (EALLRQQRRE…AQGAPEKAEG (109 aa)) is disordered. Residues 222–232 (QQRRERPRRGP) show a composition bias toward basic residues. A compositionally biased stretch (low complexity) spans 285-316 (TESAAVEGTPVETPAVTPETTAAPAAVTTAEA).

It belongs to the universal ribosomal protein uS3 family. In terms of assembly, part of the 30S ribosomal subunit. Forms a tight complex with proteins S10 and S14.

In terms of biological role, binds the lower part of the 30S subunit head. Binds mRNA in the 70S ribosome, positioning it for translation. This Parafrankia sp. (strain EAN1pec) protein is Small ribosomal subunit protein uS3.